Reading from the N-terminus, the 389-residue chain is Chalcone synthase H2 (389 aa).

Cys-164 is a catalytic residue.

This sequence belongs to the thiolase-like superfamily. Chalcone/stilbene synthases family.

Its subcellular location is the cytoplasm. The enzyme catalyses (E)-4-coumaroyl-CoA + 3 malonyl-CoA + 3 H(+) = 2',4,4',6'-tetrahydroxychalcone + 3 CO2 + 4 CoA. The protein operates within secondary metabolite biosynthesis; flavonoid biosynthesis. Involved in the biosynthesis of prenylated phenolics natural products which contribute to the bitter taste of beer and display broad biological activities. Chalcone synthase that can use 4-coumaroyl-CoA to produce 4,2',4',6'-tetrahydroxychalcone (also termed naringenin-chalcone or chalcone) which can, under specific conditions, spontaneously isomerize into naringenin. The protein is Chalcone synthase H2 of Humulus lupulus (European hop).